A 162-amino-acid polypeptide reads, in one-letter code: ATP synthase subunit delta, mitochondrial (162 aa).

The N-terminal 24 residues, 1-24, are a transit peptide targeting the mitochondrion; it reads MFSVARTAIRGAARPAVRIARRGY.

In terms of assembly, F-type ATP synthases have 2 components, the catalytic core F(1) and the membrane-embedded component F(0), linked together by a central stalk and a peripheral stalk. The central stalk, also called rotor shaft, is often seen as part of F(1). The peripheral stalk is seen as part of F(0). F(0) contains the membrane channel next to the rotor. F-type ATP synthases form dimers but each monomer functions independently in ATP generation. The dimer consists of 17 different polypeptides: ATP1 (subunit alpha, 3 molecules per monomer, part of F(1)), ATP2 (subunit beta, 3 copies per monomer, part of F(1)), ATP3 (subunit gamma, part of the central stalk), ATP4 (subunit b, part of the peripheral stalk), ATP5/OSCP (subunit 5/OSCP, part of the peripheral stalk), ATP6 (subunit a, part of the peripheral stalk), ATP7 (subunit d, part of the peripheral stalk), ATP8 (subunit 8, part of the peripheral stalk), OLI1 (subunit c, part of the rotor, 10 molecules per monomer), ATP14 (subunit h, part of the peripheral stalk), ATP15 (subunit epsilon, part of the central stalk), ATP16 (subunit delta, part of the central stalk), ATP17 (subunit f, part of the peripheral stalk), ATP18 (subunit i/j, part of the peripheral stalk), ATP19 (subunit k, dimer-specific, at interface between monomers), ATP20 (subunit g, at interface between monomers), TIM11 (subunit e, at interface between monomers).

Its subcellular location is the mitochondrion inner membrane. In terms of biological role, mitochondrial membrane ATP synthase (F(1)F(0) ATP synthase or Complex V) produces ATP from ADP in the presence of a proton gradient across the membrane which is generated by electron transport complexes of the respiratory chain. F-type ATP synthases consist of two structural domains, F(1) - containing the extramembraneous catalytic core, and F(0) - containing the membrane proton channel, linked together by a central stalk and a peripheral stalk. During catalysis, ATP synthesis in the catalytic domain of F(1) is coupled via a rotary mechanism of the central stalk subunits to proton translocation. Part of the complex F(1) domain and the central stalk which is part of the complex rotary element. Rotation of the central stalk against the surrounding alpha/ATP1(3)beta/ATP2(3) subunits leads to hydrolysis of ATP in three separate catalytic sites on the beta/ATP2 subunits. This Yarrowia lipolytica (strain CLIB 122 / E 150) (Yeast) protein is ATP synthase subunit delta, mitochondrial.